The following is a 408-amino-acid chain: S-adenosylmethionine synthase (408 aa).

Residue His-16 participates in ATP binding. Residue Asp-18 participates in Mg(2+) binding. Residue Glu-44 participates in K(+) binding. L-methionine contacts are provided by Glu-57 and Gln-100. Positions 100–110 (QSPEINQGVSR) are flexible loop. ATP contacts are provided by residues 177–179 (DGK), Asp-257, 263–264 (RK), Ala-280, and Lys-284. An L-methionine-binding site is contributed by Asp-257. Lys-288 serves as a coordination point for L-methionine.

This sequence belongs to the AdoMet synthase family. Homotetramer; dimer of dimers. Requires Mg(2+) as cofactor. K(+) is required as a cofactor.

The protein resides in the cytoplasm. The catalysed reaction is L-methionine + ATP + H2O = S-adenosyl-L-methionine + phosphate + diphosphate. Its pathway is amino-acid biosynthesis; S-adenosyl-L-methionine biosynthesis; S-adenosyl-L-methionine from L-methionine: step 1/1. In terms of biological role, catalyzes the formation of S-adenosylmethionine (AdoMet) from methionine and ATP. The overall synthetic reaction is composed of two sequential steps, AdoMet formation and the subsequent tripolyphosphate hydrolysis which occurs prior to release of AdoMet from the enzyme. This chain is S-adenosylmethionine synthase, found in Bifidobacterium animalis subsp. lactis (strain AD011).